Reading from the N-terminus, the 149-residue chain is Large ribosomal subunit protein bL9 (149 aa).

It belongs to the bacterial ribosomal protein bL9 family.

Its function is as follows. Binds to the 23S rRNA. In Geobacillus thermodenitrificans (strain NG80-2), this protein is Large ribosomal subunit protein bL9.